We begin with the raw amino-acid sequence, 273 residues long: Hemin import ATP-binding protein HmuV (273 aa).

Positions 2-256 (LTAHHLDVAR…AHIAQCYGFA (255 aa)) constitute an ABC transporter domain. 34–41 (GRNGAGKS) provides a ligand contact to ATP.

It belongs to the ABC transporter superfamily. Heme (hemin) importer (TC 3.A.1.14.5) family. The complex is composed of two ATP-binding proteins (HmuV), two transmembrane proteins (HmuU) and a solute-binding protein (HmuT).

The protein localises to the cell inner membrane. Its function is as follows. Part of the ABC transporter complex HmuTUV involved in hemin import. Responsible for energy coupling to the transport system. The chain is Hemin import ATP-binding protein HmuV from Burkholderia lata (strain ATCC 17760 / DSM 23089 / LMG 22485 / NCIMB 9086 / R18194 / 383).